We begin with the raw amino-acid sequence, 95 residues long: Integration host factor subunit beta (95 aa).

The tract at residues 56–76 is disordered; it reads RAPRTGRNPKTGTSVELDGKY.

It belongs to the bacterial histone-like protein family. In terms of assembly, heterodimer of an alpha and a beta chain.

This protein is one of the two subunits of integration host factor, a specific DNA-binding protein that functions in genetic recombination as well as in transcriptional and translational control. This Shewanella woodyi (strain ATCC 51908 / MS32) protein is Integration host factor subunit beta.